The following is a 393-amino-acid chain: S-adenosylmethionine synthase 1 (393 aa).

Residue E9 coordinates Mg(2+). H15 is a binding site for ATP. A K(+)-binding site is contributed by E43. Residues E56 and Q99 each coordinate L-methionine. Residue C114 is modified to S-nitrosocysteine. ATP is bound by residues 167–169 (DGK), 235–238 (SGRF), D246, 252–253 (RK), A269, K273, and K277. Residue D246 participates in L-methionine binding. Position 277 (K277) interacts with L-methionine.

This sequence belongs to the AdoMet synthase family. As to quaternary structure, homotetramer. Interacts with GRF3. Mn(2+) is required as a cofactor. The cofactor is Mg(2+). It depends on Co(2+) as a cofactor. Requires K(+) as cofactor. In terms of processing, S-nitrosylated in the presence of NO. The inhibition of SAM1 activity by S-nitrosylation could contribute to the cross-talk between ethylene and NO signaling. As to expression, highly expressed in stems and roots.

It is found in the cytoplasm. It carries out the reaction L-methionine + ATP + H2O = S-adenosyl-L-methionine + phosphate + diphosphate. It functions in the pathway amino-acid biosynthesis; S-adenosyl-L-methionine biosynthesis; S-adenosyl-L-methionine from L-methionine: step 1/1. With respect to regulation, reversibly inhibited by NO. Inhibited by 5,5'-dithiobis-2-nitrobenzoic acid (DTNB) and N-ethylmaleimide (NEM) (in vitro). In terms of biological role, catalyzes the formation of S-adenosylmethionine from methionine and ATP. The reaction comprises two steps that are both catalyzed by the same enzyme: formation of S-adenosylmethionine (AdoMet) and triphosphate, and subsequent hydrolysis of the triphosphate. The polypeptide is S-adenosylmethionine synthase 1 (SAM1) (Arabidopsis thaliana (Mouse-ear cress)).